The chain runs to 101 residues: Small ribosomal subunit protein bS18c (101 aa).

It belongs to the bacterial ribosomal protein bS18 family. Component of the chloroplast small ribosomal subunit (SSU). Mature 70S chloroplast ribosomes of higher plants consist of a small (30S) and a large (50S) subunit. The 30S small subunit contains 1 molecule of ribosomal RNA (16S rRNA) and 24 different proteins. The 50S large subunit contains 3 rRNA molecules (23S, 5S and 4.5S rRNA) and 33 different proteins.

It is found in the plastid. It localises to the chloroplast. Component of the chloroplast ribosome (chloro-ribosome), a dedicated translation machinery responsible for the synthesis of chloroplast genome-encoded proteins, including proteins of the transcription and translation machinery and components of the photosynthetic apparatus. The sequence is that of Small ribosomal subunit protein bS18c (RPS18) from Spinacia oleracea (Spinach).